Reading from the N-terminus, the 342-residue chain is Ribosomal RNA small subunit methyltransferase C (342 aa).

Belongs to the methyltransferase superfamily. RsmC family. As to quaternary structure, monomer.

It is found in the cytoplasm. The enzyme catalyses guanosine(1207) in 16S rRNA + S-adenosyl-L-methionine = N(2)-methylguanosine(1207) in 16S rRNA + S-adenosyl-L-homocysteine + H(+). Its function is as follows. Specifically methylates the guanine in position 1207 of 16S rRNA in the 30S particle. The polypeptide is Ribosomal RNA small subunit methyltransferase C (Salmonella agona (strain SL483)).